The sequence spans 208 residues: Transcription factor atf-4 homolog (208 aa).

Disordered stretches follow at residues 18–47 (HNQT…YFNP) and 106–165 (ERRS…EKEE). Residues 110–120 (NSSASPASNWS) are compositionally biased toward low complexity. Positions 121–141 (SDEHDSQSEKSYHPYKTPEKK) are enriched in basic and acidic residues. Residues 138-201 (PEKKERKKAQ…RYFKKFMTEM (64 aa)) form the bZIP domain. Positions 140–163 (KKERKKAQNRLAATRYREKKRREK) are basic motif. The leucine-zipper stretch occupies residues 173–187 (LSVTNGKLKDQVSEL).

Belongs to the bZIP family.

The protein resides in the nucleus. In terms of biological role, transcription factor. Involved in positively modulating longevity and stress tolerance, probably acting by positively regulating expression of transsulfuration enzyme cth-2, leading to increased hydrogen sulfide production and therefore increased protein persulfidation, a protective modification of redox-reactive cysteines. May mediate longevity and increased stress resistance induced by mTORC1 suppression. In Caenorhabditis elegans, this protein is Transcription factor atf-4 homolog.